Consider the following 243-residue polypeptide: Cyclin-dependent kinase 20 (243 aa).

Residues 4–243 (YCILGRIGEG…IHLSCRFLSV (240 aa)) form the Protein kinase domain. Residues 10–18 (IGEGAHGIV) and K33 each bind ATP. The Proton acceptor role is filled by D127.

The protein belongs to the protein kinase superfamily. CMGC Ser/Thr protein kinase family. CDC2/CDKX subfamily. In terms of assembly, monomer. Interacts with TBC1D32 and MAK.

The protein localises to the nucleus. Its subcellular location is the cytoplasm. It localises to the cell projection. The protein resides in the cilium. The enzyme catalyses L-seryl-[protein] + ATP = O-phospho-L-seryl-[protein] + ADP + H(+). The catalysed reaction is L-threonyl-[protein] + ATP = O-phospho-L-threonyl-[protein] + ADP + H(+). Required for high-level Shh responses in the developing neural tube. Together with TBC1D32, controls the structure of the primary cilium by coordinating assembly of the ciliary membrane and axoneme, allowing GLI2 to be properly activated in response to SHH signaling. Involved in cell growth. Activates CDK2, a kinase involved in the control of the cell cycle, by phosphorylating residue 'Thr-160'. This chain is Cyclin-dependent kinase 20 (CDK20), found in Macaca mulatta (Rhesus macaque).